The sequence spans 311 residues: Splicing factor spf30 (311 aa).

The region spanning 76-139 is the Tudor domain; the sequence is DFTPGNLVMA…KAMPEEKRQE (64 aa). Disordered regions lie at residues 154-183 and 276-311; these read RSTP…RASS and STED…DEDS. The span at 168–183 shows a compositional bias: polar residues; it reads ASMSTSPSNYASRASS. A Phosphoserine modification is found at Ser-173. The segment covering 301 to 311 has biased composition (basic and acidic residues); sequence HIYNYREDEDS.

This sequence belongs to the SMN family. Associates with spliceosomes.

The protein localises to the nucleus. Its function is as follows. Involved in spliceosome assembly. This chain is Splicing factor spf30 (spf30), found in Schizosaccharomyces pombe (strain 972 / ATCC 24843) (Fission yeast).